Here is a 911-residue protein sequence, read N- to C-terminus: Alpha-actinin-4 (911 aa).

The actin-binding stretch occupies residues 1-269 (MVDYHAANQA…YVSSFYHAFS (269 aa)). An interaction with VCL region spans residues 12-26 (QYGPSSGGNGTGGGG). The tract at residues 12–31 (QYGPSSGGNGTGGGGGMGDY) is disordered. The span at 16–29 (SSGGNGTGGGGGMG) shows a compositional bias: gly residues. Phosphotyrosine is present on Tyr31. Residues 40–61 (RDLLLDPAWEKQQRKTFTAWCN) form an interaction with VCL region. Calponin-homology (CH) domains follow at residues 50–154 (KQQR…LRFA) and 163–269 (TSAK…HAFS). Residues 84–88 (LMLLL) carry the LXXLL motif motif. Positions 108–126 (KINNVNKALDFIASKGVKL) are interaction with VCL. N6-acetyllysine is present on Lys114. The segment at 177–192 (TAPYKNVNVQNFHISW) is polyphosphoinositide (PIP2)-binding. Residue Lys214 is modified to N6-acetyllysine. Thr249 carries the post-translational modification Phosphothreonine. 4 Spectrin repeats span residues 293 to 403 (HLME…WLLN), 413 to 518 (HLAE…ALEK), 528 to 639 (QLHL…ALLE), and 649 to 752 (HLRR…EVEN). Lys592 and Lys625 each carry N6-acetyllysine. Ser696 carries the post-translational modification Phosphoserine. Positions 736–911 (WEQLLTTIAR…STALYGESDL (176 aa)) are mediates interaction with MICALL2. EF-hand domains lie at 765–800 (EQMQ…LGYD) and 806–841 (QGDA…ETTD). Asp778 contributes to the Ca(2+) binding site. Lys779 carries the N6-acetyllysine modification. Residues Asp780 and Glu789 each contribute to the Ca(2+) site. Position 859 is an N6-acetyllysine (Lys859). Position 909 is a phosphoserine (Ser909).

This sequence belongs to the alpha-actinin family. In terms of assembly, homodimer; antiparallel. Interacts with MAGI1. Interacts with MICALL2 (preferentially in opened conformation); stimulated by RAB13 activation. Identified in a IGF2BP1-dependent mRNP granule complex containing untranslated mRNAs. Component of the CART complex, at least composed of ACTN4, HGS/HRS, MYO5B and TRIM3. Binds TRIM3 at the N-terminus. Interacts with PDLIM2. Identified in a complex with CASK, IQGAP1, MAGI2, NPHS1, SPTAN1 and SPTBN1. Interacts with PPARG and RARA. Binds to VCL; this interaction triggers VCL conformational changes. Interacts with SEPTIN14. Interacts with IGSF8. In terms of tissue distribution, expressed in the foot process layer of podocytes in the kidney glomerulus but not in tubules (at protein level).

Its subcellular location is the nucleus. The protein localises to the cytoplasm. It is found in the cell junction. It localises to the cytoskeleton. The protein resides in the stress fiber. Its subcellular location is the perinuclear region. Its function is as follows. F-actin cross-linking protein which is thought to anchor actin to a variety of intracellular structures. This is a bundling protein. Probably involved in vesicular trafficking via its association with the CART complex. The CART complex is necessary for efficient transferrin receptor recycling but not for EGFR degradation. Involved in tight junction assembly in epithelial cells probably through interaction with MICALL2. Links MICALL2 to the actin cytoskeleton and recruits it to the tight junctions. May also function as a transcriptional coactivator, stimulating transcription mediated by the nuclear hormone receptors PPARG and RARA. Association with IGSF8 regulates the immune synapse formation and is required for efficient T-cell activation. In Rattus norvegicus (Rat), this protein is Alpha-actinin-4.